Consider the following 1435-residue polypeptide: Cardiac-enriched FHL2-interacting protein (1435 aa).

4 disordered regions span residues 109 to 176 (EEKY…PPKF), 203 to 234 (SNTH…GSSS), 250 to 270 (FPSP…GTFL), and 291 to 311 (KDTA…DTTL). Thr-120 is modified (phosphothreonine). Polar residues predominate over residues 133 to 147 (LRSSNKPVSKVSTLI). Residues 149 to 160 (SFDRTESQRCES) show a composition bias toward basic and acidic residues. Position 323 is a phosphoserine (Ser-323). Disordered stretches follow at residues 362-592 (EGKA…LTLS), 609-772 (AERS…EKEN), 795-847 (SQGE…SPSS), 1007-1108 (PEGD…ARVT), 1138-1261 (SPRG…PGGP), and 1363-1435 (QGPR…EGIS). Residues 389-402 (KGKESLQDTLEEKT) show a composition bias toward basic and acidic residues. Phosphoserine is present on Ser-470. Basic and acidic residues-rich tracts occupy residues 479–493 (QEKE…DSYK), 522–535 (VLDE…DGKQ), 609–620 (AERSSYENKEVE), and 650–667 (CNRD…KTHQ). Positions 668–679 (LENGLSRSVSQE) are enriched in polar residues. Over residues 727–741 (KFSTSSSDQSFASFD) the composition is skewed to low complexity. The segment covering 751–772 (NQREDRRKDVSAGDSQKDEKEN) has biased composition (basic and acidic residues). Phosphoserine is present on Ser-816. Polar residues predominate over residues 831 to 847 (KGTTFSQAKDLTPSPSS). Residues 1055 to 1066 (NSPNPGSPGESS) show a composition bias toward low complexity. A compositionally biased stretch (polar residues) spans 1067–1082 (ACSPAASNIWEESSQA). Positions 1083-1093 (PGGPELLPEEP) are enriched in low complexity. Residues 1094 to 1105 (NQASPWASSSPA) are compositionally biased toward polar residues. Over residues 1182 to 1193 (RRAKKLASKRRK) the composition is skewed to basic residues. The span at 1194-1211 (TDQAQEKHGESQEGKPCP) shows a compositional bias: basic and acidic residues. Over residues 1424–1435 (DDLEDFATEGIS) the composition is skewed to acidic residues.

As to quaternary structure, interacts with FHL2. As to expression, expressed in the heart and skeletal muscle.

Its subcellular location is the cytoplasm. The protein localises to the myofibril. It localises to the sarcomere. The protein resides in the z line. Plays an important role in cardiomyocyte hypertrophy via activation of the calcineurin/NFAT signaling pathway. This Homo sapiens (Human) protein is Cardiac-enriched FHL2-interacting protein.